A 416-amino-acid polypeptide reads, in one-letter code: Glutamate dehydrogenase (416 aa).

Lys-105 is an active-site residue.

It belongs to the Glu/Leu/Phe/Val dehydrogenases family. As to quaternary structure, homohexamer.

The enzyme catalyses L-glutamate + NAD(+) + H2O = 2-oxoglutarate + NH4(+) + NADH + H(+). It carries out the reaction L-glutamate + NADP(+) + H2O = 2-oxoglutarate + NH4(+) + NADPH + H(+). This Thermotoga maritima (strain ATCC 43589 / DSM 3109 / JCM 10099 / NBRC 100826 / MSB8) protein is Glutamate dehydrogenase (gdhA).